We begin with the raw amino-acid sequence, 331 residues long: Aldo-keto reductase family 7 member A3 (331 aa).

The residue at position 6 (Ser-6) is a Phosphoserine. NADPH-binding residues include Met-17, Asp-44, and Tyr-49. Residue Tyr-49 is the Proton donor of the active site. Ser-85 carries the post-translational modification Phosphoserine. 9 residues coordinate NADPH: His-113, Ser-143, Asn-144, Asn-198, Leu-200, Gly-202, Lys-208, Tyr-209, and Arg-222. Residue Thr-227 is modified to Phosphothreonine. 3 residues coordinate NADPH: Ser-290, Gln-294, and Asn-298.

This sequence belongs to the aldo/keto reductase family. Aldo/keto reductase 2 subfamily. In terms of assembly, homodimer. Expressed in colon, kidney, liver, pancreas, adenocarcinoma and endometrium.

The protein resides in the cytoplasm. It catalyses the reaction a primary alcohol + NADP(+) = an aldehyde + NADPH + H(+). It carries out the reaction aflatoxin B1 dialdehyde + NADPH + H(+) = aflatoxin B1 C(6a)-monoaldehyde + NADP(+). The enzyme catalyses aflatoxin B1 dialdehyde + NADPH + H(+) = aflatoxin B1 C(8)-monoaldehyde + NADP(+). The catalysed reaction is aflatoxin B1 C(6a)-monoaldehyde + NADPH + 2 H(+) = aflatoxin B1 triol + NADP(+). Its activity is regulated as follows. Inhibited by citrate. Catalyzes the NADPH-dependent reduction of various carbonyl-containing compounds, including aldehydes, ketones, and toxic products from cellular metabolism or environmental exposure. Can reduce the dialdehyde form of aflatoxin B1 (AFB1) into alcohol derivatives, via monoaldehydes intermediates. Can reduce the dialdehyde form of aflatoxin B1 (AFB1) into alcohol derivatives, via monoaldehydes intermediates, thus preventing the formation of protein adducts that contribute to AFB1-induced toxicity. The chain is Aldo-keto reductase family 7 member A3 from Homo sapiens (Human).